The chain runs to 257 residues: Probable amino-acid ABC transporter-binding protein HI_1080 (257 aa).

Residues 1-23 (MKKLLFTTALLTGAIAFSTFSHA) form the signal peptide.

Belongs to the bacterial solute-binding protein 3 family.

It is found in the periplasm. Its function is as follows. Probably part of a binding-protein-dependent transport system for an amino acid. The protein is Probable amino-acid ABC transporter-binding protein HI_1080 of Haemophilus influenzae (strain ATCC 51907 / DSM 11121 / KW20 / Rd).